The chain runs to 148 residues: uncharacterized protein (148 aa).

A run of 3 helical transmembrane segments spans residues 25–45 (FCTV…LLTA), 85–105 (IVRF…LLYL), and 118–138 (LAAT…WVFG).

This sequence belongs to the GtrA family.

It is found in the cell membrane. This is an uncharacterized protein from Bacillus subtilis (strain 168).